A 268-amino-acid polypeptide reads, in one-letter code: Zinc transporter ZupT (268 aa).

8 helical membrane passes run 6–26 (IIFA…GGVI), 37–57 (FLAG…FVEI), 73–93 (GGNW…AVID), 126–146 (VLTA…TFVA), 153–173 (IAIP…IAVA), 189–209 (WATL…ILLM), 211–231 (FLGP…MVFI), and 248–268 (TAIY…LLFI). Fe(2+) contacts are provided by Asn136 and Glu139. Zn(2+) contacts are provided by Glu139 and His164. Fe(2+)-binding residues include Asn165, Glu168, and Glu197. Glu168 serves as a coordination point for Zn(2+).

The protein belongs to the ZIP transporter (TC 2.A.5) family. ZupT subfamily.

It localises to the cell membrane. It carries out the reaction Zn(2+)(in) = Zn(2+)(out). Functionally, mediates zinc uptake. May also transport other divalent cations. In Corynebacterium efficiens (strain DSM 44549 / YS-314 / AJ 12310 / JCM 11189 / NBRC 100395), this protein is Zinc transporter ZupT.